The primary structure comprises 397 residues: F-box protein At4g11590 (397 aa).

Positions 24-70 (EKNFNDVPLDVAIEIFMRLPVKSVARFLLLSKFWAEIIRSRHFITSF) constitute an F-box domain.

In terms of assembly, part of a SCF (ASK-cullin-F-box) protein ligase complex. Interacts with ASK16.

It localises to the nucleus. It participates in protein modification; protein ubiquitination. Component of SCF(ASK-cullin-F-box) E3 ubiquitin ligase complexes, which may mediate the ubiquitination and subsequent proteasomal degradation of target proteins. This Arabidopsis thaliana (Mouse-ear cress) protein is F-box protein At4g11590.